The sequence spans 338 residues: CRISPR-associated endonuclease Cas1 (338 aa).

Mn(2+)-binding residues include E155, H220, and E235.

This sequence belongs to the CRISPR-associated endonuclease Cas1 family. Homodimer, forms a heterotetramer with a Cas2 homodimer. Mg(2+) serves as cofactor. Mn(2+) is required as a cofactor.

CRISPR (clustered regularly interspaced short palindromic repeat), is an adaptive immune system that provides protection against mobile genetic elements (viruses, transposable elements and conjugative plasmids). CRISPR clusters contain spacers, sequences complementary to antecedent mobile elements, and target invading nucleic acids. CRISPR clusters are transcribed and processed into CRISPR RNA (crRNA). Acts as a dsDNA endonuclease. Involved in the integration of spacer DNA into the CRISPR cassette. The type III-A Csm effector complex binds crRNA and acts as a crRNA-guided RNase, DNase and cyclic oligoadenylate synthase; binding of target RNA cognate to the crRNA is required for all activities. This Mycobacterium tuberculosis (strain CDC 1551 / Oshkosh) protein is CRISPR-associated endonuclease Cas1.